Reading from the N-terminus, the 922-residue chain is Probable outer membrane protein pmp1 (922 aa).

The signal sequence occupies residues M1 to A26. Positions S620–F922 constitute an Autotransporter domain.

It belongs to the PMP outer membrane protein family.

The protein resides in the secreted. It is found in the cell wall. The protein localises to the cell outer membrane. This is Probable outer membrane protein pmp1 (pmp1) from Chlamydia pneumoniae (Chlamydophila pneumoniae).